The primary structure comprises 383 residues: L-lactate dehydrogenase (383 aa).

The region spanning 1-380 is the FMN hydroxy acid dehydrogenase domain; sequence MIISSGNDYR…NADCLVQAIK (380 aa). Tyrosine 24 is a substrate binding site. Residues serine 106 and glutamine 127 each coordinate FMN. Substrate is bound at residue tyrosine 129. Threonine 155 is a binding site for FMN. Arginine 164 lines the substrate pocket. FMN is bound at residue lysine 251. Residue histidine 275 is the Proton acceptor of the active site. Position 278 (arginine 278) interacts with substrate. 306–330 provides a ligand contact to FMN; that stretch reads DSGIRNGLDVVRMLALGADTVLLGR.

Belongs to the FMN-dependent alpha-hydroxy acid dehydrogenase family. The cofactor is FMN.

It is found in the cell inner membrane. It carries out the reaction (S)-lactate + A = pyruvate + AH2. Catalyzes the conversion of L-lactate to pyruvate. Is coupled to the respiratory chain. The polypeptide is L-lactate dehydrogenase (Acinetobacter baumannii (strain AB307-0294)).